The sequence spans 247 residues: Segregation and condensation protein A (247 aa).

This sequence belongs to the ScpA family. In terms of assembly, component of a cohesin-like complex composed of ScpA, ScpB and the Smc homodimer, in which ScpA and ScpB bind to the head domain of Smc. The presence of the three proteins is required for the association of the complex with DNA.

Its subcellular location is the cytoplasm. Functionally, participates in chromosomal partition during cell division. May act via the formation of a condensin-like complex containing Smc and ScpB that pull DNA away from mid-cell into both cell halves. The protein is Segregation and condensation protein A of Lactobacillus gasseri (strain ATCC 33323 / DSM 20243 / BCRC 14619 / CIP 102991 / JCM 1131 / KCTC 3163 / NCIMB 11718 / NCTC 13722 / AM63).